We begin with the raw amino-acid sequence, 128 residues long: Fluoride-specific ion channel FluC (128 aa).

4 consecutive transmembrane segments (helical) span residues 3–23 (FTTI…RSFT), 34–54 (LSFP…IGFL), 65–85 (INLK…FSTF), and 102–122 (FLNI…GFWI). Na(+) contacts are provided by Gly77 and Thr80.

Belongs to the fluoride channel Fluc/FEX (TC 1.A.43) family.

The protein localises to the cell inner membrane. The enzyme catalyses fluoride(in) = fluoride(out). Na(+) is not transported, but it plays an essential structural role and its presence is essential for fluoride channel function. Functionally, fluoride-specific ion channel. Important for reducing fluoride concentration in the cell, thus reducing its toxicity. The sequence is that of Fluoride-specific ion channel FluC from Campylobacter fetus subsp. fetus (strain 82-40).